We begin with the raw amino-acid sequence, 154 residues long: Low molecular weight protein-tyrosine-phosphatase PtpA (154 aa).

Residue Cys-8 is the Nucleophile of the active site. Arg-14 is an active-site residue. Residue Asp-120 is the Proton donor of the active site.

It belongs to the low molecular weight phosphotyrosine protein phosphatase family. In terms of assembly, interacts with host CORO1A. Post-translationally, phosphorylations at Tyr-122 and Tyr-123 are essential for phosphatase activity.

The protein localises to the secreted. It catalyses the reaction O-phospho-L-tyrosyl-[protein] + H2O = L-tyrosyl-[protein] + phosphate. Its function is as follows. Secreted tyrosine phosphatase that plays a critical role during infection as a bacterial effector protein that counteracts host defenses. Required for intramacrophage survival. The sequence is that of Low molecular weight protein-tyrosine-phosphatase PtpA (ptpA) from Staphylococcus aureus (strain MRSA252).